The chain runs to 1018 residues: Probable inorganic carbon transporter subunit DabA 2 (1018 aa).

Cys-489, Asp-491, His-674, and Cys-689 together coordinate Zn(2+).

Belongs to the inorganic carbon transporter (TC 9.A.2) DabA family. Forms a complex with DabB. Zn(2+) serves as cofactor.

The protein resides in the cell inner membrane. In terms of biological role, part of an energy-coupled inorganic carbon pump. The chain is Probable inorganic carbon transporter subunit DabA 2 from Sorangium cellulosum (strain So ce56) (Polyangium cellulosum (strain So ce56)).